The chain runs to 208 residues: FMN-dependent NADH:quinone oxidoreductase 1 (208 aa).

This sequence belongs to the azoreductase type 1 family. Homodimer. FMN is required as a cofactor.

It catalyses the reaction 2 a quinone + NADH + H(+) = 2 a 1,4-benzosemiquinone + NAD(+). The catalysed reaction is N,N-dimethyl-1,4-phenylenediamine + anthranilate + 2 NAD(+) = 2-(4-dimethylaminophenyl)diazenylbenzoate + 2 NADH + 2 H(+). Quinone reductase that provides resistance to thiol-specific stress caused by electrophilic quinones. In terms of biological role, also exhibits azoreductase activity. Catalyzes the reductive cleavage of the azo bond in aromatic azo compounds to the corresponding amines. The sequence is that of FMN-dependent NADH:quinone oxidoreductase 1 from Bacillus thuringiensis subsp. konkukian (strain 97-27).